The primary structure comprises 419 residues: tRNA(Ile)-lysidine synthase (419 aa).

Position 25–30 (25–30 (SGGIDS)) interacts with ATP.

This sequence belongs to the tRNA(Ile)-lysidine synthase family.

Its subcellular location is the cytoplasm. It carries out the reaction cytidine(34) in tRNA(Ile2) + L-lysine + ATP = lysidine(34) in tRNA(Ile2) + AMP + diphosphate + H(+). Ligates lysine onto the cytidine present at position 34 of the AUA codon-specific tRNA(Ile) that contains the anticodon CAU, in an ATP-dependent manner. Cytidine is converted to lysidine, thus changing the amino acid specificity of the tRNA from methionine to isoleucine. This Actinobacillus pleuropneumoniae serotype 7 (strain AP76) protein is tRNA(Ile)-lysidine synthase.